The sequence spans 758 residues: Calpain (758 aa).

One can recognise a Calpain catalytic domain in the interval 99–397; it reads LWEDPDFPAN…FSRVEVCHLG (299 aa). Residues Cys-154, His-313, and Asn-337 contribute to the active site. Residues 398–562 form a domain III region; that stretch reads LESLEYNQNF…TSITEQELDE (165 aa). The interval 563 to 582 is linker; the sequence is DNTNQGLPDDVIEALKLEDT. The tract at residues 583–757 is domain IV; that stretch reads LLDEDQEIEQ…AEDYLRFSVY (175 aa). Ca(2+) contacts are provided by Asp-641, Asn-643, Thr-645, His-647, Glu-652, Asp-671, Asp-673, Ser-675, Tyr-677, and Glu-682. 2 consecutive EF-hand domains span residues 658–693 and 694–729; these read IQAKGWKHIFIKHDVDQSGYFSAYEFREALNDAGYH and VSNRLINAIINRYQDPGTDKISFEDFMLCMVRLKTA.

It belongs to the peptidase C2 family.

Its activity is regulated as follows. Activated by free cytoplasmic calcium. Calpains are calcium-activated non-lysosomal thiol-proteases. The polypeptide is Calpain (Schistosoma mansoni (Blood fluke)).